The sequence spans 471 residues: Methionine aminopeptidase 2 (471 aa).

2 disordered regions span residues 16–80 (VVDD…IDRF) and 92–139 (CEHP…DFNR). The segment covering 32 to 47 (EDGDDNDDAVNEGEAV) has biased composition (acidic residues). Over residues 52–65 (KKKKKKNKKKKKKG) the composition is skewed to basic residues. The segment covering 119 to 139 (AEERAKDDAKHGSDDPLDFNR) has biased composition (basic and acidic residues). H224 is a binding site for substrate. The a divalent metal cation site is built by D244, D255, and H324. Position 332 (H332) interacts with substrate. A divalent metal cation is bound by residues E357 and E452.

This sequence belongs to the peptidase M24A family. Methionine aminopeptidase eukaryotic type 2 subfamily. Co(2+) serves as cofactor. Requires Zn(2+) as cofactor. The cofactor is Mn(2+). Fe(2+) is required as a cofactor.

Its subcellular location is the cytoplasm. It catalyses the reaction Release of N-terminal amino acids, preferentially methionine, from peptides and arylamides.. Functionally, cotranslationally removes the N-terminal methionine from nascent proteins. The N-terminal methionine is often cleaved when the second residue in the primary sequence is small and uncharged (Met-Ala-, Cys, Gly, Pro, Ser, Thr, or Val). The protein is Methionine aminopeptidase 2 of Yarrowia lipolytica (strain CLIB 122 / E 150) (Yeast).